Reading from the N-terminus, the 578-residue chain is Translation initiation factor eIF2B subunit gamma (578 aa).

A phosphoserine mark is found at S296 and S300. Disordered stretches follow at residues Q298 to S337 and D535 to R578. T306 bears the Phosphothreonine mark. Over residues E544–R578 the composition is skewed to acidic residues.

Belongs to the eIF-2B gamma/epsilon subunits family. In terms of assembly, component of the translation initiation factor 2B (eIF2B) complex which is a heterodecamer of two sets of five different subunits: alpha, beta, gamma, delta and epsilon. Subunits alpha, beta and delta comprise a regulatory subcomplex and subunits epsilon and gamma comprise a catalytic subcomplex. Within the complex, the hexameric regulatory complex resides at the center, with the two heterodimeric catalytic subcomplexes bound on opposite sides.

The protein resides in the cytoplasm. It is found in the cytosol. Its function is as follows. Acts as a component of the translation initiation factor 2B (eIF2B) complex, which catalyzes the exchange of GDP for GTP on the eukaryotic initiation factor 2 (eIF2) complex gamma subunit. Its guanine nucleotide exchange factor activity is repressed when bound to eIF2 complex phosphorylated on the alpha subunit, thereby limiting the amount of methionyl-initiator methionine tRNA available to the ribosome and consequently global translation is repressed. It activates the synthesis of GCN4 in yeast under amino acid starvation conditions by suppressing the inhibitory effects of multiple AUG codons present in the leader of GCN4 mRNA. It may promote either repression or activation of GCN4 expression depending on amino acid availability. GCD1 stabilizes the interaction between eIF2 and GCD6 and stimulates the catalytic activity in vitro. The polypeptide is Translation initiation factor eIF2B subunit gamma (GCD1) (Saccharomyces cerevisiae (strain ATCC 204508 / S288c) (Baker's yeast)).